The chain runs to 233 residues: Small ribosomal subunit protein uS7m (233 aa).

Residues 1–28 constitute a mitochondrion transit peptide; it reads MAAPTGKLLVHRIRAGLTCLTQVRWSRY.

It belongs to the universal ribosomal protein uS7 family. In terms of assembly, component of the mitochondrial ribosome small subunit (28S) which comprises a 12S rRNA and about 30 distinct proteins.

Its subcellular location is the mitochondrion. In Xenopus laevis (African clawed frog), this protein is Small ribosomal subunit protein uS7m (mrps7).